The following is a 106-amino-acid chain: UPF0060 membrane protein RHE_CH01408 (106 aa).

4 consecutive transmembrane segments (helical) span residues 4 to 24, 30 to 50, 59 to 79, and 86 to 106; these read IIYA…WAWL, AWWL…LTLV, FAAY…LIEG, and DIGG…APRA.

This sequence belongs to the UPF0060 family.

The protein resides in the cell inner membrane. The protein is UPF0060 membrane protein RHE_CH01408 of Rhizobium etli (strain ATCC 51251 / DSM 11541 / JCM 21823 / NBRC 15573 / CFN 42).